A 431-amino-acid polypeptide reads, in one-letter code: Glutamate-1-semialdehyde 2,1-aminomutase (431 aa).

K265 bears the N6-(pyridoxal phosphate)lysine mark.

Belongs to the class-III pyridoxal-phosphate-dependent aminotransferase family. HemL subfamily. Homodimer. The cofactor is pyridoxal 5'-phosphate.

Its subcellular location is the cytoplasm. It carries out the reaction (S)-4-amino-5-oxopentanoate = 5-aminolevulinate. The protein operates within porphyrin-containing compound metabolism; protoporphyrin-IX biosynthesis; 5-aminolevulinate from L-glutamyl-tRNA(Glu): step 2/2. This is Glutamate-1-semialdehyde 2,1-aminomutase from Vibrio vulnificus (strain CMCP6).